The chain runs to 400 residues: MRIFKSHPLLKLVNSYIIDSPQPTNLSYLWNFGSLLALCLGIQIVTGVTLAMHYTPNVLDAFDSIEHIMRDVNNGWLIRYLHSNTASAFFFLVYLHIGRGIYYGSYQGPRTLTWSIGTIIFIAMVATAFLGYVLPYGQMSLWGATVITNLLSAIPWIGQDLVEFIWGGFSVNNATLNRFFSLHFLLPFILAALVLMHLIALHDTVGSSNPLGISGNYDRLPFAPYYLFKDLVTIFLFMLILSIFVFFMPNALGDCENYVMANPMQTPPAIVPEWYLLPFYAILRSIPDKAVGVVLMFGAILIILALPYLDKSILRGIQYRPLSKVAFYIFVANFLVLMQLGAKHVEDPFIVFGQLSTILYFSYFIIIIPLLSLIENELLDIATNYSSNKTLKNRKSLLSE.

4 helical membrane passes run 32 to 52 (FGSL…TLAM), 76 to 98 (WLIR…LHIG), 113 to 133 (TWSI…LGYV), and 179 to 199 (FFSL…MHLI). 2 residues coordinate heme b: His82 and His96. His183 and His197 together coordinate heme b. An a ubiquinone-binding site is contributed by His202. 4 consecutive transmembrane segments (helical) span residues 226–246 (YLFK…IFVF), 290–310 (AVGV…PYLD), 322–342 (LSKV…QLGA), and 349–369 (FIVF…IIIP).

This sequence belongs to the cytochrome b family. In terms of assembly, fungal cytochrome b-c1 complex contains 10 subunits; 3 respiratory subunits, 2 core proteins and 5 low-molecular weight proteins. Cytochrome b-c1 complex is a homodimer. Heme b serves as cofactor.

It is found in the mitochondrion inner membrane. Component of the ubiquinol-cytochrome c reductase complex (complex III or cytochrome b-c1 complex) that is part of the mitochondrial respiratory chain. The b-c1 complex mediates electron transfer from ubiquinol to cytochrome c. Contributes to the generation of a proton gradient across the mitochondrial membrane that is then used for ATP synthesis. The polypeptide is Cytochrome b (cob) (Epidermophyton floccosum).